Consider the following 501-residue polypeptide: Endosomal/lysosomal proton channel TMEM175 (501 aa).

The interval 1 to 20 (MAAPRAATPGPGGGARKPEL) is disordered. The Cytoplasmic portion of the chain corresponds to 1 to 31 (MAAPRAATPGPGGGARKPELDLELGSSTQTS). A helical membrane pass occupies residues 32–54 (HRLLAYSDALLSIIATVMILPVA). Residues 33–39 (RLLAYSD) carry the RxxxFSD motif 1 motif. The Lumenal segment spans residues 55 to 75 (HTKIHPDQKLGESVQQLLLTK). The interval 56-61 (TKIHPD) is short helix H1-1. The tract at residues 63-69 (KLGESVQ) is short helix H2-1. The chain crosses the membrane as a helical span at residues 76–98 (IAVYLMTFLIVTVAWAAHVRLFQ). The Cytoplasmic segment spans residues 99 to 104 (VIELID). Residues 105 to 126 (DVLALLNLACMMIITFLPYTFS) traverse the membrane as a helical segment. Topologically, residues 127–136 (LMASFPGVPF) are lumenal. The helical transmembrane segment at 137–158 (GIFLFSVCAVVIGLIQAVIVVY) threads the bilayer. The Cytoplasmic portion of the chain corresponds to 159–182 (GFYHPHLLNQQIQVSENQNFYKRH). The helical transmembrane segment at 183–203 (ILKIILRGPALCFLAAIFSFF) threads the bilayer. Residues 204–208 (FIPLS) are Lumenal-facing. Residues 209 to 228 (YLLLGLVIVFPHLSRFITWC) traverse the membrane as a helical segment. Residues 229–257 (KTKIVGHRDEEEASYSLETFSFYLSEPLS) lie on the Cytoplasmic side of the membrane. A helical membrane pass occupies residues 258–282 (KERVEAFSDGVYAIVATLLILDICE). The RxxxFSD motif 2 signature appears at 260-266 (RVEAFSD). The Lumenal portion of the chain corresponds to 283 to 309 (DNVPDPREVGEKFHGSLLEALSEYGPN). Residues 288–296 (PREVGEKFH) form a short helix H1-2 region. The short helix H2-2 stretch occupies residues 298 to 304 (SLLEALS). A helical membrane pass occupies residues 310-332 (YLAYFGSFVTIGLLWFVHHSLFL). Residues 333–338 (YVTKAT) lie on the Cytoplasmic side of the membrane. A helical membrane pass occupies residues 339 to 360 (RLMGLLNILSLAFIGGLPLAYQ). The Lumenal portion of the chain corresponds to 361 to 375 (LTSEFAEKSHNEIEA). Residues 376–396 (IQVSCVITFFASIFQFAIWTT) form a helical membrane-spanning segment. The Cytoplasmic portion of the chain corresponds to 397 to 416 (ALLHERETLHPFARYGGKEH). Residues 417–440 (AFMFAKLALYPCVSLGAFFLTCLL) form a helical membrane-spanning segment. The Lumenal segment spans residues 441 to 442 (SE). The chain crosses the membrane as a helical span at residues 443–469 (FSTEIFHLMQIVIPFAFLALRIFVRIS). Topologically, residues 470–501 (LTVIKSVMSLSRRKVVLLEEEEACLSPTETHS) are cytoplasmic.

Belongs to the TMEM175 family. Homodimer.

It localises to the endosome membrane. The protein resides in the lysosome membrane. The enzyme catalyses H(+)(in) = H(+)(out). It carries out the reaction K(+)(in) = K(+)(out). With respect to regulation, active at low pH (under pH 4.6): proton channel activity is activated by luminal side protons. Polyunsaturated fatty acids, such as arachidonic acid, also activate the channel activity. Functionally, proton-activated proton channel that catalyzes proton efflux from endosomes and lysosomes to maintain a steady-state pH. Activated at low pH (under pH 4.6) by luminal side protons: selectively mediates lysosomal proton release from lysosomes, eliciting a proton leak that balances V-ATPase activity to maintain pH homeostasis. Regulation of lumenal pH stability is required for autophagosome-lysosome fusion. Also acts as a potassium channel at higher pH, regulating potassium conductance in endosomes and lysosomes. The polypeptide is Endosomal/lysosomal proton channel TMEM175 (Gallus gallus (Chicken)).